Here is a 397-residue protein sequence, read N- to C-terminus: Arginine biosynthesis bifunctional protein ArgJ (397 aa).

Substrate is bound by residues Thr-143, Lys-169, Thr-180, Glu-266, Asn-392, and Thr-397. Thr-180 (nucleophile) is an active-site residue.

It belongs to the ArgJ family. Heterotetramer of two alpha and two beta chains.

Its subcellular location is the cytoplasm. It carries out the reaction N(2)-acetyl-L-ornithine + L-glutamate = N-acetyl-L-glutamate + L-ornithine. The catalysed reaction is L-glutamate + acetyl-CoA = N-acetyl-L-glutamate + CoA + H(+). Its pathway is amino-acid biosynthesis; L-arginine biosynthesis; L-ornithine and N-acetyl-L-glutamate from L-glutamate and N(2)-acetyl-L-ornithine (cyclic): step 1/1. It functions in the pathway amino-acid biosynthesis; L-arginine biosynthesis; N(2)-acetyl-L-ornithine from L-glutamate: step 1/4. With respect to regulation, competitively inhibited by L-ornithine. Functionally, catalyzes two activities which are involved in the cyclic version of arginine biosynthesis: the synthesis of N-acetylglutamate from glutamate and acetyl-CoA as the acetyl donor, and of ornithine by transacetylation between N(2)-acetylornithine and glutamate. The sequence is that of Arginine biosynthesis bifunctional protein ArgJ from Thermotoga neapolitana (strain ATCC 49049 / DSM 4359 / NBRC 107923 / NS-E).